A 433-amino-acid polypeptide reads, in one-letter code: MVCLDLSQYRMITDVKNKDNTLILEINKIYEIEVEIPYEEVEIDGSIIKINAHPKRAENIKVGILNLISYSIANNLKSKITKRKTIYINEPIPLIGHTAFGLIERGRNIIQVRGHCGCNLNCIFCSVDEGEFSKTRKNDYYVDLEYLIENYKKIVDFKENKFIEAHLDGQGEPSLYYPLVDLVQELAEINKKGNGIVSMQTNGTVLNYKLIDELEEAGLHRINLSINALDEKMAKMLSGRRDYNIKKILDIAEYIKNSKIHLLIAPLLLPNINDEEFKRVIEYAVDLEQKNPQNIINPLTGKKDPILGCQLCRVYQLGRRPKKMKVWDFEKFYYLLGKYELEYKKKGIEVKLITSPKDFGTHKRKRLPYPFKVGEVTKVKVVLDGRVKGEVLGVAKDRVIQIINCNNEQNLIGKTVKVRILRNKDNIIVAELV.

One can recognise a Radical SAM core domain in the interval 104 to 349; it reads ERGRNIIQVR…ELEYKKKGIE (246 aa). 3 residues coordinate [4Fe-4S] cluster: Cys118, Cys122, and Cys125. Residues 171–172 and 236–238 contribute to the S-adenosyl-L-methionine site; these read GE and MLS. Positions 370 to 433 constitute a TRAM domain; it reads PFKVGEVTKV…KDNIIVAELV (64 aa).

Belongs to the radical SAM superfamily. [4Fe-4S] cluster is required as a cofactor.

This is an uncharacterized protein from Methanocaldococcus jannaschii (strain ATCC 43067 / DSM 2661 / JAL-1 / JCM 10045 / NBRC 100440) (Methanococcus jannaschii).